The chain runs to 360 residues: Alpha-N-acetyl-neuraminyl-2,3-beta-galactosyl-1,3-N-acetyl-galactosaminide alpha-2,6-sialyltransferase (360 aa).

The Cytoplasmic segment spans residues 1 to 71 (MEHVVTCWRL…PGRLLLLTLC (71 aa)). Residues 72–94 (ILTFSAVCVFLCCWACLPLCLAT) traverse the membrane as a helical; Signal-anchor for type II membrane protein segment. The Lumenal portion of the chain corresponds to 95–360 (CLDRHLPAAP…VFAHPSWRAK (266 aa)). Residues C134 and C283 are joined by a disulfide bond. N193 is a glycosylation site (N-linked (GlcNAc...) asparagine).

Belongs to the glycosyltransferase 29 family. In terms of tissue distribution, high expression in brain and colon and to a lesser extent in lung, heart, kidney, spleen and thymus.

It localises to the golgi apparatus membrane. The catalysed reaction is an alpha-Neu5Ac-(2-&gt;3)-beta-D-Gal-(1-&gt;3)-D-GlcNAc derivative + CMP-N-acetyl-beta-neuraminate = an alpha-Neu5Ac-(2-&gt;3)-beta-D-Gal-(1-&gt;3)-[alpha-Neu5Ac-(2-&gt;6)]-D-GlcNAc derivative + CMP + H(+). It carries out the reaction N-acetyl-alpha-neuraminosyl-(2-&gt;3)-beta-D-galactosyl-(1-&gt;3)-N-acetyl-D-galactosamine + CMP-N-acetyl-beta-neuraminate = N-acetyl-alpha-neuraminosyl-(2-&gt;3)-beta-D-galactosyl-(1-&gt;3)-[N-acetyl-alpha-neuraminosyl-(2-&gt;6)]-N-acetyl-D-galactosamine + CMP + H(+). The enzyme catalyses a ganglioside GM1b (d18:1(4E)) + CMP-N-acetyl-beta-neuraminate = a ganglioside GD1alpha (d18:1(4E)) + CMP + H(+). It catalyses the reaction 3-O-[alpha-Neu5Ac-(2-&gt;3)-beta-D-Gal-(1-&gt;3)-alpha-D-GalNAc]-L-Ser-[protein] + CMP-N-acetyl-beta-neuraminate = a 3-O-{alpha-Neu5Ac-(2-&gt;3)-beta-D-Gal-(1-&gt;3)-[alpha-Neu5Ac-(2-&gt;6)]-alpha-D-GalNAc}-L-seryl-[protein] + CMP + H(+). The catalysed reaction is 3-O-[alpha-Neu5Ac-(2-&gt;3)-beta-D-Gal-(1-&gt;3)-alpha-D-GalNAc]-L-Thr-[protein] + CMP-N-acetyl-beta-neuraminate = a 3-O-{alpha-Neu5Ac-(2-&gt;3)-beta-D-Gal-(1-&gt;3)-[alpha-Neu5Ac-(2-&gt;6)]-alpha-D-GalNAc}-L-threonyl-[protein] + CMP + H(+). It participates in protein modification; protein glycosylation. Its pathway is glycolipid biosynthesis. Transfers the sialyl group (N-acetyl-alpha-neuraminyl or NeuAc) from CMP-NeuAc to the GalNAc residue on the NeuAc-alpha-2,3-Gal-beta-1,3-GalNAc sequence of glycoproteins and glycolipids forming an alpha-2,6-linkage. Produces branched type disialyl structures by transfer of a sialyl group onto a GalNAc residue inside the backbone core chains. Prefers O-glycans to glycoproteins or glycolipids. In Mus musculus (Mouse), this protein is Alpha-N-acetyl-neuraminyl-2,3-beta-galactosyl-1,3-N-acetyl-galactosaminide alpha-2,6-sialyltransferase (St6galnac4).